The sequence spans 63 residues: Putative alpha-neurotoxin RjAa9 (63 aa).

The LCN-type CS-alpha/beta domain occupies 1-60; the sequence is KEGYPVDWGNCKYECMSDEYCKDLCADRKATSGYCYKLNWSCYCKGLPDDSPIKTPGKCR. Intrachain disulfides connect cysteine 11–cysteine 59, cysteine 15–cysteine 35, cysteine 21–cysteine 42, and cysteine 25–cysteine 44.

Belongs to the long (4 C-C) scorpion toxin superfamily. Sodium channel inhibitor family. Alpha subfamily. As to expression, expressed by the venom gland.

The protein resides in the secreted. Alpha toxins bind voltage-independently at site-3 of sodium channels (Nav) and inhibits the inactivation of the activated channels, thereby blocking neuronal transmission. The sequence is that of Putative alpha-neurotoxin RjAa9 from Rhopalurus junceus (Caribbean blue scorpion).